We begin with the raw amino-acid sequence, 138 residues long: Large ribosomal subunit protein uL16 (138 aa).

The segment covering 1-13 (MLQPKRRKYRKEQ) has biased composition (basic residues). The disordered stretch occupies residues 1-22 (MLQPKRRKYRKEQKGRNTGVAT).

It belongs to the universal ribosomal protein uL16 family. As to quaternary structure, part of the 50S ribosomal subunit.

Functionally, binds 23S rRNA and is also seen to make contacts with the A and possibly P site tRNAs. This chain is Large ribosomal subunit protein uL16, found in Paraburkholderia phymatum (strain DSM 17167 / CIP 108236 / LMG 21445 / STM815) (Burkholderia phymatum).